An 837-amino-acid chain; its full sequence is A disintegrin and metalloproteinase with thrombospondin motifs 4 (837 aa).

The N-terminal stretch at 1-51 is a signal peptide; sequence MSQTGSHPGRGLAGRWLWGAQPCLLLPIVPLSWLVWLLLLLLASLLPSARL. A propeptide spanning residues 52–212 is cleaved from the precursor; sequence ASPLPREEEI…PSPRPRRAKR (161 aa). A glycan (N-linked (GlcNAc...) asparagine) is linked at Asn-68. The Cysteine switch signature appears at 192 to 199; sequence PMCNVKAP. Zn(2+) is bound at residue Cys-194. The Peptidase M12B domain maps to 218–428; it reads RFVETLVVAD…GYGHCLLDKP (211 aa). Disulfide bonds link Cys-293/Cys-345, Cys-322/Cys-327, Cys-339/Cys-423, Cys-377/Cys-407, Cys-449/Cys-472, Cys-460/Cys-482, Cys-467/Cys-501, Cys-495/Cys-506, Cys-532/Cys-569, Cys-536/Cys-574, and Cys-547/Cys-559. His-361 is a binding site for Zn(2+). Residue Glu-362 is part of the active site. 2 residues coordinate Zn(2+): His-365 and His-371. In terms of domain architecture, Disintegrin spans 437-519; that stretch reads TFPGKDYDAD…DQLQDFNIPQ (83 aa). The region spanning 520–575 is the TSP type-1 domain; sequence AGGWGPWGPWGDCSRTCGGGVQFSSRDCTRPVPRNGGKYCEGRRTRFRSCNTEDCP. The spacer stretch occupies residues 686–837; it reads SKQSGSFRKF…LRRRPWAGRK (152 aa).

As to quaternary structure, interacts with SRPX2. It depends on Zn(2+) as a cofactor. The precursor is cleaved by a furin endopeptidase. Post-translationally, glycosylated. Can be O-fucosylated by POFUT2 on a serine or a threonine residue found within the consensus sequence C1-X(2)-(S/T)-C2-G of the TSP type-1 repeat domains where C1 and C2 are the first and second cysteine residue of the repeat, respectively. Fucosylated repeats can then be further glycosylated by the addition of a beta-1,3-glucose residue by the glucosyltransferase, B3GALTL. Fucosylation mediates the efficient secretion of ADAMTS family members. Can also be C-glycosylated with one or two mannose molecules on tryptophan residues within the consensus sequence W-X-X-W of the TPRs, and N-glycosylated. These other glycosylations can also facilitate secretion. As to expression, expressed in brain, lung and heart. Expressed at very low level in placenta and skeletal muscles. Isoform 2: Detected in osteoarthritic synovium.

It is found in the secreted. The protein localises to the extracellular space. Its subcellular location is the extracellular matrix. It carries out the reaction Glutamyl endopeptidase. Bonds cleaved include 370-Thr-Glu-Gly-Glu-|-Ala-Arg-Gly-Ser-377 in the interglobular domain of mammalian aggrecan.. In terms of biological role, cleaves aggrecan, a cartilage proteoglycan, at the '392-Glu-|-Ala-393' site and may be involved in its turnover. Also cleaves COMP. May play an important role in the destruction of aggrecan in arthritic diseases. Could be a critical factor in the exacerbation of neurodegeneration in Alzheimer disease. The protein is A disintegrin and metalloproteinase with thrombospondin motifs 4 (ADAMTS4) of Homo sapiens (Human).